The primary structure comprises 80 residues: MSQEEILQKVCSIVSEQLSVESAEVKSDSNFQNDLGADSLDTVELVMALEEAFDIEIPDEAAEGIATVGDAVKFIEEKKG.

The 76-residue stretch at 4 to 79 (EEILQKVCSI…DAVKFIEEKK (76 aa)) folds into the Carrier domain. Ser-39 bears the O-(pantetheine 4'-phosphoryl)serine mark.

This sequence belongs to the acyl carrier protein (ACP) family. Post-translationally, 4'-phosphopantetheine is transferred from CoA to a specific serine of apo-ACP by AcpS. This modification is essential for activity because fatty acids are bound in thioester linkage to the sulfhydryl of the prosthetic group.

The protein localises to the cytoplasm. Its pathway is lipid metabolism; fatty acid biosynthesis. In terms of biological role, carrier of the growing fatty acid chain in fatty acid biosynthesis. The chain is Acyl carrier protein from Prochlorococcus marinus subsp. pastoris (strain CCMP1986 / NIES-2087 / MED4).